Consider the following 330-residue polypeptide: Protein RfbI (330 aa).

One can recognise a 2Fe-2S ferredoxin-type domain in the interval 3–89 (HIIKIFPSNI…ELNAHFFPEL (87 aa)). The [2Fe-2S] cluster site is built by Cys-37, Cys-42, and Cys-45. The 99-residue stretch at 94–192 (KKIVPCKVNS…EGPCGTFFIR (99 aa)) folds into the FAD-binding FR-type domain.

The cofactor is [2Fe-2S] cluster.

Its pathway is bacterial outer membrane biogenesis; LPS O-antigen biosynthesis. In Salmonella typhimurium (strain LT2 / SGSC1412 / ATCC 700720), this protein is Protein RfbI (rfbI).